The primary structure comprises 462 residues: Dipeptidyl peptidase 1 (462 aa).

Positions 1–24 (MGPWTHSLRAALLLVLLGVCTVSS) are cleaved as a signal peptide. N-linked (GlcNAc...) asparagine glycosylation is found at N29 and N53. 2 disulfides stabilise this stretch: C30–C118 and C54–C136. Residues 135 to 229 (ACFVGKKMAN…TDEIQQQILS (95 aa)) constitute a propeptide that is removed on maturation. N-linked (GlcNAc...) asparagine glycosylation occurs at N144. Disulfide bonds link C254-C297, C290-C330, and C320-C336. Residue C257 is part of the active site. The N-linked (GlcNAc...) asparagine glycan is linked to N275. Chloride-binding residues include F301 and Y303. Y346 is a chloride binding site. Active-site residues include H404 and N426.

This sequence belongs to the peptidase C1 family. Tetramer of heterotrimers consisting of exclusion domain, heavy- and light chains. It depends on chloride as a cofactor. In terms of tissue distribution, broadly distributed, but higher levels found in liver, spleen, intestine, lung and kidney.

The protein localises to the lysosome. The catalysed reaction is Release of an N-terminal dipeptide, Xaa-Yaa-|-Zaa-, except when Xaa is Arg or Lys, or Yaa or Zaa is Pro.. Its function is as follows. Thiol protease. Has dipeptidylpeptidase activity. Active against a broad range of dipeptide substrates composed of both polar and hydrophobic amino acids. Proline cannot occupy the P1 position and arginine cannot occupy the P2 position of the substrate. Can act as both an exopeptidase and endopeptidase. Activates serine proteases such as elastase, cathepsin G and granzymes A and B. This chain is Dipeptidyl peptidase 1 (Ctsc), found in Rattus norvegicus (Rat).